The sequence spans 562 residues: Glucocorticoid modulatory element-binding protein 1 (562 aa).

A2 is subject to N-acetylalanine. An SAND domain is found at 72–156 (ASSIEANEDM…RKMMDSGQID (85 aa)). Residue C103 participates in Zn(2+) binding. The DNA site is built by K129, K133, K136, and R147. Zn(2+) contacts are provided by H160, C164, and C168. The stretch at 311–357 (LDNRRKQVEHGEEQFLYTLADLERQLEEQKKQAQDPRLKSQTVQNVV) forms a coiled coil. The tract at residues 360 to 384 (PVSTPKPPKRPRLQRPASTTVLSPS) is disordered. Polar residues predominate over residues 375-384 (PASTTVLSPS).

As to quaternary structure, homodimer, and heterodimer of GMEB1 and GMEB2. Interacts with the glucocorticoid receptor (NR3C1) and NCOA2/TIF2. May interact with HSP27 and CREB-binding protein (CBP). Interacts with TRIM63.

Its subcellular location is the nucleus. The protein localises to the cytoplasm. Trans-acting factor that binds to glucocorticoid modulatory elements (GME) present in the TAT (tyrosine aminotransferase) promoter and increases sensitivity to low concentrations of glucocorticoids. Also binds to the transferrin receptor promoter. The protein is Glucocorticoid modulatory element-binding protein 1 (Gmeb1) of Rattus norvegicus (Rat).